The following is a 372-amino-acid chain: tRNA-specific 2-thiouridylase MnmA (372 aa).

Residues Gly-16–Ser-23 and Met-42 each bind ATP. Residues Asn-102–Asp-104 form an interaction with target base in tRNA region. The active-site Nucleophile is Cys-107. The cysteines at positions 107 and 205 are disulfide-linked. Gly-132 serves as a coordination point for ATP. Positions Lys-155 to Gln-157 are interaction with tRNA. The Cysteine persulfide intermediate role is filled by Cys-205. An interaction with tRNA region spans residues Arg-317–Tyr-318.

It belongs to the MnmA/TRMU family.

It is found in the cytoplasm. The catalysed reaction is S-sulfanyl-L-cysteinyl-[protein] + uridine(34) in tRNA + AH2 + ATP = 2-thiouridine(34) in tRNA + L-cysteinyl-[protein] + A + AMP + diphosphate + H(+). In terms of biological role, catalyzes the 2-thiolation of uridine at the wobble position (U34) of tRNA, leading to the formation of s(2)U34. This chain is tRNA-specific 2-thiouridylase MnmA, found in Shewanella baltica (strain OS223).